We begin with the raw amino-acid sequence, 345 residues long: Endochitinase 4 (345 aa).

Residues 1-27 form the signal peptide; sequence MAPLLNTGLVILPLIVSTLLGPMPAFA. N-linked (GlcNAc...) asparagine glycans are attached at residues N29 and N89. The region spanning 41-345 is the GH18 domain; the sequence is KVLQGYWENW…TFGDNVKGRL (305 aa). E163 (proton donor) is an active-site residue. N-linked (GlcNAc...) asparagine glycosylation occurs at N316.

This sequence belongs to the glycosyl hydrolase 18 family. Chitinase class V subfamily.

It is found in the secreted. It carries out the reaction Random endo-hydrolysis of N-acetyl-beta-D-glucosaminide (1-&gt;4)-beta-linkages in chitin and chitodextrins.. Its function is as follows. Secreted chitinase involved in the degradation of chitin, a component of the cell walls of fungi and exoskeletal elements of some animals (including worms and arthropods). Participates in the infection process and directly acts in the penetration process of the host cuticle. This chain is Endochitinase 4 (chi4), found in Metarhizium robertsii (strain ARSEF 23 / ATCC MYA-3075) (Metarhizium anisopliae (strain ARSEF 23)).